Reading from the N-terminus, the 388-residue chain is Oxytocin receptor (388 aa).

A disordered region spans residues 1–32 (MEGTPAANWSVELDLGSGVPPGEEGNRTAGPP). At 1–38 (MEGTPAANWSVELDLGSGVPPGEEGNRTAGPPQRNEAL) the chain is on the extracellular side. Asparagine 8 and asparagine 26 each carry an N-linked (GlcNAc...) asparagine glycan. Residues 39–63 (ARVEVAVLCLILFLALSGNACVLLA) form a helical membrane-spanning segment. Residues 64 to 74 (LRTTRHKHSRL) are Cytoplasmic-facing. Residues 75–97 (FFFMKHLSIADLVVAVFQVLPQL) traverse the membrane as a helical segment. Over 98–113 (LWDITFRFYGPDLLCR) the chain is Extracellular. A disulfide bond links cysteine 112 and cysteine 187. Residues 114-135 (LVKYLQVVGMFASTYLLLLMSL) form a helical membrane-spanning segment. At 136-154 (DRCLAICQPLRSLRRRTDR) the chain is on the cytoplasmic side. The chain crosses the membrane as a helical span at residues 155 to 175 (LAVLGTWLGCLVASAPQVHIF). Over 176-202 (SLREVADGVFDCWAVFIQPWGPKAYVT) the chain is Extracellular. A helical transmembrane segment spans residues 203 to 225 (WITLAVYIVPVIVLAACYGLISF). Topologically, residues 226 to 274 (KIWQNLRLKTAAAAAAAEGNDAAGGAGRAALARVSSVKLISKAKIRTVK) are cytoplasmic. A helical transmembrane segment spans residues 275-293 (MTFIIVLAFIVCWTPFFFV). Over 294 to 308 (QMWSVWDVNAPKEAS) the chain is Extracellular. Residues 309–331 (AFIIAMLLASLNSCCNPWIYMLF) traverse the membrane as a helical segment. Topologically, residues 332–388 (TGHLFHELVQRFFCCSARYLKGSRPGETSVSKKSNSSTFVLSRRSSSQRSCSQPSSA) are cytoplasmic. Residues 354-388 (SRPGETSVSKKSNSSTFVLSRRSSSQRSCSQPSSA) form a disordered region. Residues serine 365 and serine 367 each carry the phosphoserine modification. The span at 365-388 (SNSSTFVLSRRSSSQRSCSQPSSA) shows a compositional bias: low complexity.

It belongs to the G-protein coupled receptor 1 family. Vasopressin/oxytocin receptor subfamily.

Its subcellular location is the cell membrane. Its function is as follows. Receptor for oxytocin. The activity of this receptor is mediated by G proteins which activate a phosphatidylinositol-calcium second messenger system. In Rattus norvegicus (Rat), this protein is Oxytocin receptor (Oxtr).